A 406-amino-acid polypeptide reads, in one-letter code: Eukaryotic initiation factor 4A-I (406 aa).

Residues 1-21 (MSASQDSRSRDNGPDGMEPEG) are disordered. Position 2 is an N-acetylserine (Ser2). Phosphoserine is present on Ser4. Residues 32-60 (DSFDDMNLSESLLRGIYAYGFEKPSAIQQ) carry the Q motif motif. One can recognise a Helicase ATP-binding domain in the interval 63–234 (ILPCIKGYDV…KKFMRDPIRI (172 aa)). 76-83 (AQSGTGKT) is a binding site for ATP. Lys118 bears the N6-acetyllysine mark. Lys146 is covalently cross-linked (Glycyl lysine isopeptide (Lys-Gly) (interchain with G-Cter in SUMO2)). Position 158 is a phosphothreonine (Thr158). An N6-acetyllysine modification is found at Lys174. Positions 182–185 (DEAD) match the DEAD box motif. The residue at position 193 (Lys193) is an N6-acetyllysine. Residue Lys225 forms a Glycyl lysine isopeptide (Lys-Gly) (interchain with G-Cter in SUMO2) linkage. At Lys238 the chain carries N6-acetyllysine; alternate. Lys238 participates in a covalent cross-link: Glycyl lysine isopeptide (Lys-Gly) (interchain with G-Cter in SUMO2); alternate. The 162-residue stretch at 245 to 406 (GIRQFYINVE…EMPLNVADLI (162 aa)) folds into the Helicase C-terminal domain. Residues Lys309, Lys369, and Lys381 each participate in a glycyl lysine isopeptide (Lys-Gly) (interchain with G-Cter in SUMO2) cross-link.

This sequence belongs to the DEAD box helicase family. eIF4A subfamily. EIF4F is a multi-subunit complex, the composition of which varies with external and internal environmental conditions. It is composed of at least EIF4A, EIF4E and EIF4G1/EIF4G3. Interacts with PAIP1, EIF4E and UPF2. Found in a complex with XPO7, EIF4A1, ARHGAP1, VPS26A, VPS29, VPS35 and SFN. May interact with NOM1. Interacts with PDCD4; this interferes with the interaction between EIF4A and EIF4G. Interacts with RBM4. Interacts with DDX3X in an RNA-independent manner. Interacts with PKP1 (via N-terminus); the interaction promotes EIF4A1 recruitment to the cap-dependent translation complex and EIF4A1 ATPase activity.

Its subcellular location is the cytoplasm. It is found in the perinuclear region. The protein localises to the cell membrane. It localises to the stress granule. The catalysed reaction is ATP + H2O = ADP + phosphate + H(+). In terms of biological role, ATP-dependent RNA helicase which is a subunit of the eIF4F complex involved in cap recognition and is required for mRNA binding to ribosome. In the current model of translation initiation, eIF4A unwinds RNA secondary structures in the 5'-UTR of mRNAs which is necessary to allow efficient binding of the small ribosomal subunit, and subsequent scanning for the initiator codon. As a result, promotes cell proliferation and growth. The protein is Eukaryotic initiation factor 4A-I (EIF4A1) of Bos taurus (Bovine).